Here is a 197-residue protein sequence, read N- to C-terminus: RILP-like protein 2 (197 aa).

Positions 1–24 are disordered; the sequence is MEDHPVREEEDGEEDEGALAKSPL. A compositionally biased stretch (acidic residues) spans 8 to 17; the sequence is EEEDGEEDEG. The RH1 domain maps to 14–96; that stretch reads EDEGALAKSP…KQEVEGLRKA (83 aa). Residues 69–153 adopt a coiled-coil conformation; sequence VNEGSLAVEE…VQEELQCYRS (85 aa). The RH2 domain occupies 119–184; that stretch reads RPRFTLQELR…GNGEKEERTI (66 aa).

The protein belongs to the RILPL family. As to quaternary structure, homodimer. Interacts with RAC1. Interacts (via N-terminus) with MYO5A, the interaction is required for its role in dendrite formation. Interacts with RAB8A; interaction is dependent on the phosphorylation of RAB8A on 'Thr-72'. Interacts with RAB10 and RAB12; interaction is dependent on the phosphorylation of 'Thr-73' on RAB10 and 'Ser-105' on RAB12.

It is found in the cytoplasm. Its subcellular location is the cytosol. The protein localises to the cytoskeleton. It localises to the microtubule organizing center. The protein resides in the centrosome. It is found in the cell projection. Its subcellular location is the cilium. Functionally, involved in cell shape and neuronal morphogenesis, positively regulating the establishment and maintenance of dendritic spines. Plays a role in cellular protein transport, including protein transport away from primary cilia. May function via activation of RAC1 and PAK1. The polypeptide is RILP-like protein 2 (Rilpl2) (Mus musculus (Mouse)).